Consider the following 541-residue polypeptide: Membrane protein insertase YidC (541 aa).

6 helical membrane passes run 6–26 (NLLL…WESD), 326–346 (VVDY…LMFF), 349–369 (LVHN…GLLY), 420–440 (GGCL…WVLL), 457–477 (LSVQ…MWAM), and 500–520 (MIFT…WLVG).

The protein belongs to the OXA1/ALB3/YidC family. Type 1 subfamily. Interacts with the Sec translocase complex via SecD. Specifically interacts with transmembrane segments of nascent integral membrane proteins during membrane integration.

Its subcellular location is the cell inner membrane. Its function is as follows. Required for the insertion and/or proper folding and/or complex formation of integral membrane proteins into the membrane. Involved in integration of membrane proteins that insert both dependently and independently of the Sec translocase complex, as well as at least some lipoproteins. Aids folding of multispanning membrane proteins. This is Membrane protein insertase YidC from Shewanella amazonensis (strain ATCC BAA-1098 / SB2B).